The primary structure comprises 114 residues: Large ribosomal subunit protein uL22 (114 aa).

This sequence belongs to the universal ribosomal protein uL22 family. Part of the 50S ribosomal subunit.

Its function is as follows. This protein binds specifically to 23S rRNA; its binding is stimulated by other ribosomal proteins, e.g. L4, L17, and L20. It is important during the early stages of 50S assembly. It makes multiple contacts with different domains of the 23S rRNA in the assembled 50S subunit and ribosome. In terms of biological role, the globular domain of the protein is located near the polypeptide exit tunnel on the outside of the subunit, while an extended beta-hairpin is found that lines the wall of the exit tunnel in the center of the 70S ribosome. The sequence is that of Large ribosomal subunit protein uL22 from Bacillus licheniformis (strain ATCC 14580 / DSM 13 / JCM 2505 / CCUG 7422 / NBRC 12200 / NCIMB 9375 / NCTC 10341 / NRRL NRS-1264 / Gibson 46).